Here is a 445-residue protein sequence, read N- to C-terminus: Glutamate--tRNA ligase 1 (445 aa).

A 'HIGH' region motif is present at residues 8–18 (PSPTGKLHVGN). Positions 239–243 (KLSKR) match the 'KMSKS' region motif. Lysine 242 is an ATP binding site.

It belongs to the class-I aminoacyl-tRNA synthetase family. Glutamate--tRNA ligase type 1 subfamily. Monomer.

The protein resides in the cytoplasm. It carries out the reaction tRNA(Glu) + L-glutamate + ATP = L-glutamyl-tRNA(Glu) + AMP + diphosphate. Functionally, catalyzes the attachment of glutamate to tRNA(Glu) in a two-step reaction: glutamate is first activated by ATP to form Glu-AMP and then transferred to the acceptor end of tRNA(Glu). The sequence is that of Glutamate--tRNA ligase 1 from Maricaulis maris (strain MCS10) (Caulobacter maris).